We begin with the raw amino-acid sequence, 224 residues long: Non-structural protein V (224 aa).

Positions 55-65 (KNIQYPTTSHQ) are enriched in polar residues. Disordered stretches follow at residues 55 to 90 (KNIQYPTTSHQGSKSKGRGSGARPIIVSSSEGGTGG) and 145 to 172 (TSTPVTEFKRGAGSGCSRPDNPRGGHRR). 8 residues coordinate Zn(2+): His-170, Cys-189, Cys-193, Cys-205, Cys-207, Cys-210, Cys-214, and Cys-217.

Belongs to the paramyxoviruses V protein family. Interacts with host IFIH1/MDA5 and DHX58/LGP2. Forms with host DDB1, CUL4A, STAT1, STAT2 and STAT3 the mumps virus V-dependent complex (VDC).

The protein localises to the virion. It localises to the host cytoplasm. In terms of biological role, plays an essential role in the inhibition of host immune response. Prevents the establishment of cellular antiviral state by blocking interferon-alpha/beta (IFN-alpha/beta) production and signaling pathway. Interacts with host IFIH1/MDA5 and DHX58/LGP2 to inhibit the transduction pathway involved in the activation of IFN-beta promoter, thus protecting the virus against cell antiviral state. Blocks the type I and II interferon signaling pathways by interacting with host STAT1, STAT2 and STAT3, and mediating their ubiquitination and subsequent proteasomal degradation. The protein is Non-structural protein V of Mumps virus genotype B (strain Miyahara vaccine) (MuV).